A 375-amino-acid chain; its full sequence is MLDRDVGPTPMYPPTYLEPGIGRHTPYGNQTDYRIFELNKRLQNWTEECDNLWWDAFTTEFFEDDAMLTITFCLEDGPKRYTIGRTLIPRYFRSIFEGGATELYYVLKHPKESFHNNFVSLDCDQCTMVTQHGKPMFTQVCVEGRLYLEFMFDDMMRIKTWHFSIRQHRELIPRSILAMHAQDPQMLDQLSKNITRCGLSNSTLNYLRLCVILEPMQELMSRHKTYSLSPRDCLKTCLFQKWQRMVAPPAEPARQAPSKRRKRKMSGGSTMSSGGGNTNNSNSKKKSPASTFALSSQVPDVMVVGEPTLMGGEFGDEDERLITRLENTQFDAANGIDDEDSFNNSPALGANSPWNSKPPSSQESKSENPTSQASQ.

Disordered regions lie at residues 248 to 294 (PPAE…TFAL) and 331 to 375 (DAAN…QASQ). A compositionally biased stretch (low complexity) spans 266-282 (SGGSTMSSGGGNTNNSN). One can recognise an LIM interaction domain (LID) domain in the interval 300–339 (DVMVVGEPTLMGGEFGDEDERLITRLENTQFDAANGIDDE).

Belongs to the LDB family. In terms of assembly, forms homodimers and heterodimers. Interacts with the LIM domain of LIM/homeobox factor lhx1/lim1, and with lhx3/lim3 and lhx5/lim5. Activates lhx1/lim1 by binding. The stoichiometry of lhx1/lim1 and ldb1 is important for their function and an excess of ldb1 can inhibit lhx1/lim1 function. When bound to lhx1/lim1, escapes degradation by rnf12. The N-terminus interacts with the N-terminal region of rnf12. In terms of processing, undergoes rnf12-mediated ubiquitin-proteasome-dependent degradation. In terms of tissue distribution, ubiquitously expressed in the early gastrula before localizing to the dorsal region of the vegetal hemisphere, which contains the Spemann organizer. Expressed in the CNS, pronephros and tail bud in neurula and tail-bud stage embryos. Expressed in multiple adult tissues including brain, heart, lung, stomach, intestine, liver, spleen, kidney, ovary, muscle and skin.

Its subcellular location is the nucleus. In terms of biological role, binds to the LIM domain of a wide variety of LIM domain-containing transcription factors. Acts as a coactivator together with otx2 to stimulate lhx1/lim1-mediated activation of the gsc promoter in the Spemann organizer. Acts synergistically with lhx1/lim1 and ssbp in axis formation. The sequence is that of LIM domain-binding protein 1 (ldb1) from Xenopus laevis (African clawed frog).